Consider the following 187-residue polypeptide: Putative manganese efflux pump MntP (187 aa).

Helical transmembrane passes span Y3–G23, I39–S59, I65–I85, L106–F126, V129–G149, and L166–F186.

This sequence belongs to the MntP (TC 9.B.29) family.

The protein localises to the cell inner membrane. Probably functions as a manganese efflux pump. This Actinobacillus succinogenes (strain ATCC 55618 / DSM 22257 / CCUG 43843 / 130Z) protein is Putative manganese efflux pump MntP.